The chain runs to 269 residues: 5'-nucleotidase SurE (269 aa).

Residues Asp8, Asp9, Ser40, and Asn93 each contribute to the a divalent metal cation site.

The protein belongs to the SurE nucleotidase family. Requires a divalent metal cation as cofactor.

The protein resides in the cytoplasm. The enzyme catalyses a ribonucleoside 5'-phosphate + H2O = a ribonucleoside + phosphate. In terms of biological role, nucleotidase that shows phosphatase activity on nucleoside 5'-monophosphates. This is 5'-nucleotidase SurE from Caulobacter sp. (strain K31).